We begin with the raw amino-acid sequence, 332 residues long: T-cell surface glycoprotein CD1b2 (332 aa).

A signal peptide spans Met1–Asp17. The Extracellular portion of the chain corresponds to Thr18 to Gly301. N-linked (GlcNAc...) asparagine glycosylation is found at Asn38, Asn75, and Asn146. Intrachain disulfides connect Cys120–Cys184, Cys149–Cys163, and Cys224–Cys279. Positions Pro185–Trp295 constitute an Ig-like domain. A glycan (N-linked (GlcNAc...) asparagine) is linked at Asn297. The helical transmembrane segment at Trp302–Phe322 threads the bilayer. The Cytoplasmic segment spans residues Tyr323–Leu332. Positions Tyr328 to Ile331 match the Internalization signal motif.

As to quaternary structure, heterodimer with B2M (beta-2-microglobulin). Interacts with saposin C.

Its subcellular location is the cell membrane. It localises to the endosome membrane. The protein resides in the lysosome membrane. In terms of biological role, antigen-presenting protein that binds self and non-self lipid and glycolipid antigens and presents them to T-cell receptors on natural killer T-cells. In Cavia porcellus (Guinea pig), this protein is T-cell surface glycoprotein CD1b2 (CD1B2).